The primary structure comprises 362 residues: Ferredoxin--NADP reductase, leaf isozyme 1, chloroplastic (362 aa).

The transit peptide at 1-36 (MAAVTAAAVSTSAAAAVTKASPSPAHCFLPCPPRTR) directs the protein to the chloroplast. An FAD-binding FR-type domain is found at 83 to 205 (KEPYVGKCLL…TGPVGKEMLM (123 aa)). Residues 141–144 (RLYS), 162–164 (CVK), tyrosine 168, 179–181 (VCS), and threonine 220 each bind FAD. NADP(+) contacts are provided by serine 144 and lysine 164. A disulfide bridge links cysteine 180 with cysteine 185. Serine 181 carries the post-translational modification Phosphoserine. Residues threonine 220, 252-253 (VP), 282-283 (SR), lysine 292, 321-322 (GL), and glutamate 360 each bind NADP(+).

The protein belongs to the ferredoxin--NADP reductase type 1 family. As to quaternary structure, heterodimer with LFNR2. Component of high molecular weight thylakoid LFNRs-containing protein complexes containing LIR1, LFNR1, LFNR2, TIC62 and TROL proteins. Interacts directly with LFNR1 and LFNR2; LIR1 increases the affinity of LFNR1 and LFNR2 for TIC62 and subsequent thylakoid relocalization. FAD serves as cofactor. In terms of processing, may form interchain disulfide bonds with LIR1.

Its subcellular location is the plastid. The protein localises to the chloroplast stroma. It localises to the chloroplast thylakoid membrane. It catalyses the reaction 2 reduced [2Fe-2S]-[ferredoxin] + NADP(+) + H(+) = 2 oxidized [2Fe-2S]-[ferredoxin] + NADPH. The protein operates within energy metabolism; photosynthesis. Plays a key role in regulating the relative amounts of cyclic and non-cyclic electron flow to meet the demands of the plant for ATP and reducing power. This is Ferredoxin--NADP reductase, leaf isozyme 1, chloroplastic from Oryza sativa subsp. indica (Rice).